The sequence spans 77 residues: Acyl carrier protein (77 aa).

In terms of domain architecture, Carrier spans 2–77 (ADTLSRITKI…DVVEYIEGRQ (76 aa)). Residue S37 is modified to O-(pantetheine 4'-phosphoryl)serine.

Belongs to the acyl carrier protein (ACP) family. In terms of processing, 4'-phosphopantetheine is transferred from CoA to a specific serine of apo-ACP by AcpS. This modification is essential for activity because fatty acids are bound in thioester linkage to the sulfhydryl of the prosthetic group.

The protein localises to the cytoplasm. It functions in the pathway lipid metabolism; fatty acid biosynthesis. Functionally, carrier of the growing fatty acid chain in fatty acid biosynthesis. The sequence is that of Acyl carrier protein from Halalkalibacterium halodurans (strain ATCC BAA-125 / DSM 18197 / FERM 7344 / JCM 9153 / C-125) (Bacillus halodurans).